A 250-amino-acid chain; its full sequence is DNA repair protein RecO (250 aa).

This sequence belongs to the RecO family.

Functionally, involved in DNA repair and RecF pathway recombination. The protein is DNA repair protein RecO of Staphylococcus aureus (strain Mu3 / ATCC 700698).